Here is a 226-residue protein sequence, read N- to C-terminus: Ribose-5-phosphate isomerase A (226 aa).

Substrate contacts are provided by residues 32 to 35, 85 to 88, and 98 to 101; these read TGST, DGAD, and KGGG. Glutamate 107 serves as the catalytic Proton acceptor. A substrate-binding site is contributed by lysine 125.

It belongs to the ribose 5-phosphate isomerase family. In terms of assembly, homodimer.

The catalysed reaction is aldehydo-D-ribose 5-phosphate = D-ribulose 5-phosphate. The protein operates within carbohydrate degradation; pentose phosphate pathway; D-ribose 5-phosphate from D-ribulose 5-phosphate (non-oxidative stage): step 1/1. Functionally, catalyzes the reversible conversion of ribose-5-phosphate to ribulose 5-phosphate. The polypeptide is Ribose-5-phosphate isomerase A (Saccharophagus degradans (strain 2-40 / ATCC 43961 / DSM 17024)).